The following is a 460-amino-acid chain: Cysteine--tRNA ligase (460 aa).

Cys-28 contributes to the Zn(2+) binding site. A 'HIGH' region motif is present at residues 30–40 (MTVYDYCHLGH). Residues Cys-209, His-234, and Glu-238 each coordinate Zn(2+). Residues 266–270 (KMSKS) carry the 'KMSKS' region motif. Position 269 (Lys-269) interacts with ATP.

Belongs to the class-I aminoacyl-tRNA synthetase family. As to quaternary structure, monomer. Zn(2+) serves as cofactor.

It is found in the cytoplasm. The enzyme catalyses tRNA(Cys) + L-cysteine + ATP = L-cysteinyl-tRNA(Cys) + AMP + diphosphate. The polypeptide is Cysteine--tRNA ligase (Pseudomonas aeruginosa (strain UCBPP-PA14)).